Here is a 200-residue protein sequence, read N- to C-terminus: Protein GrpE (200 aa).

Positions 1-11 are enriched in polar residues; it reads MSNQTNKAQDN. The interval 1–29 is disordered; sequence MSNQTNKAQDNQVEEIVEGELLNENGTEA.

This sequence belongs to the GrpE family. In terms of assembly, homodimer.

The protein localises to the cytoplasm. Functionally, participates actively in the response to hyperosmotic and heat shock by preventing the aggregation of stress-denatured proteins, in association with DnaK and GrpE. It is the nucleotide exchange factor for DnaK and may function as a thermosensor. Unfolded proteins bind initially to DnaJ; upon interaction with the DnaJ-bound protein, DnaK hydrolyzes its bound ATP, resulting in the formation of a stable complex. GrpE releases ADP from DnaK; ATP binding to DnaK triggers the release of the substrate protein, thus completing the reaction cycle. Several rounds of ATP-dependent interactions between DnaJ, DnaK and GrpE are required for fully efficient folding. This Shewanella halifaxensis (strain HAW-EB4) protein is Protein GrpE.